A 114-amino-acid chain; its full sequence is T cell receptor beta variable 28 (114 aa).

The first 26 residues, 1–26 (MGIRLLCRVAFCFLAVGLVDVKVTQS), serve as a signal peptide directing secretion. Positions 27–114 (SRYLVKRTGE…TSMYLCASSL (88 aa)) constitute an Ig-like domain. The cysteines at positions 42 and 110 are disulfide-linked. An N-linked (GlcNAc...) asparagine glycan is attached at asparagine 103.

In terms of assembly, alpha-beta TR is a heterodimer composed of an alpha and beta chain; disulfide-linked. The alpha-beta TR is associated with the transmembrane signaling CD3 coreceptor proteins to form the TR-CD3 (TcR or TCR). The assembly of alpha-beta TR heterodimers with CD3 occurs in the endoplasmic reticulum where a single alpha-beta TR heterodimer associates with one CD3D-CD3E heterodimer, one CD3G-CD3E heterodimer and one CD247 homodimer forming a stable octameric structure. CD3D-CD3E and CD3G-CD3E heterodimers preferentially associate with TR alpha and TR beta chains, respectively. The association of the CD247 homodimer is the last step of TcR assembly in the endoplasmic reticulum and is required for transport to the cell surface.

Its subcellular location is the cell membrane. In terms of biological role, v region of the variable domain of T cell receptor (TR) beta chain that participates in the antigen recognition. Alpha-beta T cell receptors are antigen specific receptors which are essential to the immune response and are present on the cell surface of T lymphocytes. Recognize peptide-major histocompatibility (MH) (pMH) complexes that are displayed by antigen presenting cells (APC), a prerequisite for efficient T cell adaptive immunity against pathogens. Binding of alpha-beta TR to pMH complex initiates TR-CD3 clustering on the cell surface and intracellular activation of LCK that phosphorylates the ITAM motifs of CD3G, CD3D, CD3E and CD247 enabling the recruitment of ZAP70. In turn ZAP70 phosphorylates LAT, which recruits numerous signaling molecules to form the LAT signalosome. The LAT signalosome propagates signal branching to three major signaling pathways, the calcium, the mitogen-activated protein kinase (MAPK) kinase and the nuclear factor NF-kappa-B (NF-kB) pathways, leading to the mobilization of transcription factors that are critical for gene expression and essential for T cell growth and differentiation. The T cell repertoire is generated in the thymus, by V-(D)-J rearrangement. This repertoire is then shaped by intrathymic selection events to generate a peripheral T cell pool of self-MH restricted, non-autoaggressive T cells. Post-thymic interaction of alpha-beta TR with the pMH complexes shapes TR structural and functional avidity. This Homo sapiens (Human) protein is T cell receptor beta variable 28.